The following is a 62-amino-acid chain: Large ribosomal subunit protein bL28 (62 aa).

It belongs to the bacterial ribosomal protein bL28 family.

This is Large ribosomal subunit protein bL28 from Syntrophomonas wolfei subsp. wolfei (strain DSM 2245B / Goettingen).